Reading from the N-terminus, the 419-residue chain is DNA polymerase IV (419 aa).

Residues 12 to 193 (IFHIDMNCFY…MSVEEMYGIG (182 aa)) form the UmuC domain. Asp16 and Asp112 together coordinate Mg(2+). Residue Glu113 is part of the active site. The disordered stretch occupies residues 388–419 (IITSQKNKNESQENQQPRTSFQKDFLDDYKKP).

It belongs to the DNA polymerase type-Y family. Monomer. Mg(2+) is required as a cofactor.

It localises to the cytoplasm. It catalyses the reaction DNA(n) + a 2'-deoxyribonucleoside 5'-triphosphate = DNA(n+1) + diphosphate. In terms of biological role, poorly processive, error-prone DNA polymerase involved in untargeted mutagenesis. Copies undamaged DNA at stalled replication forks, which arise in vivo from mismatched or misaligned primer ends. These misaligned primers can be extended by PolIV. Exhibits no 3'-5' exonuclease (proofreading) activity. May be involved in translesional synthesis, in conjunction with the beta clamp from PolIII. The protein is DNA polymerase IV of Oceanobacillus iheyensis (strain DSM 14371 / CIP 107618 / JCM 11309 / KCTC 3954 / HTE831).